The primary structure comprises 909 residues: MSINMKTFTQALARTAAVIEKTVHTTVQEVTGPKALQDYELLDQIGSAGPGLAWKLYAAKARDSTRPQQYPTVCVWMLDKRALSEARVRANLSKAAEDAFLDLIRADAGKLVRLRHPGVVHVVQALDENKNAMALVTEPLFASVANALGNVENVGNVPKDLKSMEMSLLEVKHGLLQISETLNFLHNNANLIHRAISPENVLITSAGSWKLAGFGFAISAAQAGNLDNMQSFHYSEYDVEDSILPVQPSLNYTAPELMRSKSPSAGASSDIFSFGCLAYHLVARKPLFDCNNNVKMYMNTLNYITNESFSSIPSELVSDLQRMLSTNESFRPTALDFTGSNFFRSDARLRALRFLDHLLERDNMQKSEFLKALSDMWKDFDSRVLRYKVLPPLCAELRNLVLQPIILPMVLTIAQSQDRTDFELITLPALVPVLSTASGDTLLLLVKHADLITNKTDSEHLVSHVLPLLLRAYNDNDVRIQEEVLKRSTSVAKQLDGQVVRQAILPRVHGLALKTTVAAVRVNALLCLAELVQTLDKPAAIEILETIQRCTAVDRSAPTLMCTLAVANAILKQYGVEFTAEHVLTLMMPLLTAQQLNVQQFAKYMLFVKDILRKIEEKRGVTVNDSGVPEVKPHSAANGLQFQSSTQIPEKVASAAKSSPAWDEDWGSPSKDSAVGNPASSRHNTNDQFNKSTDQSQPSIMSTLPNKTTAPTTCPAVDIEWPPRQSSSLTAPATDNQTQLNTGTSFASGFDELDPFANWPPRPNNGASVASTGLKNGAASNFSNNLPGGTHFQTANNDNWAFSSASLSSLKPPQQGNQGISANNQDPLNSFGVPKQSQGMPSFTSGSYNNQKPADISSIFGSSKTEPSAMKLAPPPSIAMGRGRGRGRGGTGTSTSKPSGSQPSLLDLL.

The Protein kinase domain occupies 39–343; it reads YELLDQIGSA…ALDFTGSNFF (305 aa). HEAT repeat units follow at residues 311–348, 350–382, 383–401, 402–439, 465–502, 499–537, and 578–617; these read SIPS…SDAR, RALR…DFDS, RVLR…RNLV, LQPI…TASG, VLPL…VVRQ, VVRQ…TLDK, and FTAE…KIEE. Disordered regions lie at residues 624–772 and 804–909; these read NDSG…VAST and SASL…LDLL. Polar residues-rich tracts occupy residues 638–648, 678–712, 724–747, 804–828, and 835–852; these read NGLQFQSSTQI, PASS…TAPT, RQSS…TSFA, SASL…QDPL, and KQSQ…NNQK.

Belongs to the protein kinase superfamily. In terms of assembly, interacts with VTI11, VTI12 and CHC1. Expressed in roots, seedlings, leaves, stems, flowers, and, at low levels, in siliques.

It is found in the golgi apparatus membrane. Its subcellular location is the golgi apparatus. It localises to the trans-Golgi network membrane. The protein localises to the prevacuolar compartment membrane. Probably inactive kinase. Component of the AP2-containing clathrin coat that regulates clathrin-dependent trafficking at plasma membrane, TGN and endosomal system. Together with SCYL2B, required for cell growth, plant growth and development. Essential for polarized root hair development probably by mediating the root hair tip localization of cellulose synthase-like D3 (CSLD3). The chain is SCY1-like protein 2 B from Arabidopsis thaliana (Mouse-ear cress).